Reading from the N-terminus, the 389-residue chain is Glutamate 5-kinase (389 aa).

Position 16 (Lys16) interacts with ATP. Substrate contacts are provided by Ser56, Asp143, and Asn155. ATP is bound at residue Ser175–Asp176. The 78-residue stretch at Ala281–Ala358 folds into the PUA domain.

The protein belongs to the glutamate 5-kinase family.

It is found in the cytoplasm. The catalysed reaction is L-glutamate + ATP = L-glutamyl 5-phosphate + ADP. It participates in amino-acid biosynthesis; L-proline biosynthesis; L-glutamate 5-semialdehyde from L-glutamate: step 1/2. Its function is as follows. Catalyzes the transfer of a phosphate group to glutamate to form L-glutamate 5-phosphate. The protein is Glutamate 5-kinase of Rhizobium rhizogenes (strain K84 / ATCC BAA-868) (Agrobacterium radiobacter).